A 328-amino-acid chain; its full sequence is Homoarginine-6-hydroxylase 2-ODD-233 (328 aa).

The 106-residue stretch at 183–288 folds into the Fe2OG dioxygenase domain; it reads FWVCRLIGYP…VSVAFFYESN (106 aa). Fe cation-binding residues include His210, Asp212, and His268. Arg278 lines the 2-oxoglutarate pocket.

Belongs to the iron/ascorbate-dependent oxidoreductase family. Requires Fe(2+) as cofactor. It depends on L-ascorbate as a cofactor. As to expression, expressed in roots and shoots.

Its subcellular location is the cytoplasm. It catalyses the reaction L-homoarginine + 2-oxoglutarate + O2 = 6-hydroxy-L-homoarginine + succinate + CO2. It carries out the reaction melatonin + 2-oxoglutarate + O2 = 2-hydroxymelatonin + succinate + CO2. Functionally, 2-oxoglutarate-dependent dioxygenase catalyzing homoarginine 6-hydroxylation thus producing 6-hydroxy-L-homoarginine. Guanidine (Gd) is in turn synthesized by the spontaneous conversion of 6-hydroxy-L-homoarginine to (S)-2-amino-6-oxohexanoate (RHEA:79843); guanidine is a nitrogen-rich compound that can serve as a defense or signaling substance. Involved in melatonin degradation. Catalyzes the hydroxylation of melatonin to produce 2-hydroxymelatonin. The chain is Homoarginine-6-hydroxylase 2-ODD-233 from Oryza sativa subsp. japonica (Rice).